Consider the following 211-residue polypeptide: Imidazole glycerol phosphate synthase subunit HisH (211 aa).

One can recognise a Glutamine amidotransferase type-1 domain in the interval 3-211 (VIAVVDYEMG…VAQVREKIPA (209 aa)). Cys81 acts as the Nucleophile in catalysis. Active-site residues include His186 and Glu188.

As to quaternary structure, heterodimer of HisH and HisF.

The protein resides in the cytoplasm. The catalysed reaction is 5-[(5-phospho-1-deoxy-D-ribulos-1-ylimino)methylamino]-1-(5-phospho-beta-D-ribosyl)imidazole-4-carboxamide + L-glutamine = D-erythro-1-(imidazol-4-yl)glycerol 3-phosphate + 5-amino-1-(5-phospho-beta-D-ribosyl)imidazole-4-carboxamide + L-glutamate + H(+). It catalyses the reaction L-glutamine + H2O = L-glutamate + NH4(+). It functions in the pathway amino-acid biosynthesis; L-histidine biosynthesis; L-histidine from 5-phospho-alpha-D-ribose 1-diphosphate: step 5/9. In terms of biological role, IGPS catalyzes the conversion of PRFAR and glutamine to IGP, AICAR and glutamate. The HisH subunit catalyzes the hydrolysis of glutamine to glutamate and ammonia as part of the synthesis of IGP and AICAR. The resulting ammonia molecule is channeled to the active site of HisF. The polypeptide is Imidazole glycerol phosphate synthase subunit HisH (Nostoc punctiforme (strain ATCC 29133 / PCC 73102)).